We begin with the raw amino-acid sequence, 1154 residues long: CRISPR-associated endoribonuclease Cas13a (1154 aa).

2 HEPN-like fold regions span residues 330–466 (TTSN…RFIN) and 923–1154 (FVHL…EMKK).

The protein belongs to the CRISPR-associated endoribonuclease Cas13a family. A divalent metal cation is required as a cofactor.

Target RNA acts as an activator for non-specific ssRNA degradation. CRISPR (clustered regularly interspaced short palindromic repeat), is an adaptive immune system that provides protection against mobile genetic elements (viruses, transposable elements and conjugative plasmids). CRISPR clusters contain sequences complementary to antecedent mobile elements and target invading nucleic acids. Unlike many single-component effectors, this CRISPR-Cas system targets RNA. CRISPR clusters are transcribed from pre-CRISPR RNA (crRNA) and processed into crRNA by this protein. Cleaves linear target ssRNA in a pre-crRNA-dependent fashion, preferentially before U residues. Binding a viable target RNA target activates this protein for non-specific RNA degradation in vitro (called collateral RNA degradation), which is fairly sensitive as it requires picomolar levels of viable target RNA. The chain is CRISPR-associated endoribonuclease Cas13a from Paludibacter propionicigenes (strain DSM 17365 / JCM 13257 / WB4).